Consider the following 216-residue polypeptide: Phosducin-like protein 3 (216 aa).

Residues 13–59 (AKTIEQQLDQQLDRLDNLDSDDLKVLREQRLREMKDLNNKKQEWLRN) adopt a coiled-coil conformation. The Phosducin domain maps to 29–163 (NLDSDDLKVL…DLGNCDDFAT (135 aa)).

This sequence belongs to the phosducin family. In terms of tissue distribution, highly expressed in germline cells of the testis from the spermatogonia stage until the early spermatid stage but is no longer observed in late-stage spermatids in the distal end of the testis.

It carries out the reaction [thioredoxin]-dithiol + NADP(+) = [thioredoxin]-disulfide + NADPH + H(+). Its function is as follows. Has redox activity with thioredoxin. Required for male fertility and maturation of sperm past the canoe stage during spermiogenesis. The sequence is that of Phosducin-like protein 3 from Drosophila melanogaster (Fruit fly).